Reading from the N-terminus, the 700-residue chain is Long-chain-fatty-acid--CoA ligase 1 (700 aa).

The segment at 1–21 is disordered; the sequence is MVAQYTVPVGKAANEHETAPR. A Glycyl lysine isopeptide (Lys-Gly) (interchain with G-Cter in ubiquitin) cross-link involves residue lysine 189. ATP is bound at residue 269-280; that stretch reads YTSGSTGEPKGV. The FACS motif lies at 531-580; sequence DGWFKTGDIGEWEANGHLKIIDRKKNLVKTMNGEYIALEKLESVYRSNEY.

This sequence belongs to the ATP-dependent AMP-binding enzyme family. As to quaternary structure, interacts with FAT1. The cofactor is Mg(2+).

It is found in the lipid droplet. The protein localises to the cell membrane. The catalysed reaction is a long-chain fatty acid + ATP + CoA = a long-chain fatty acyl-CoA + AMP + diphosphate. The enzyme catalyses (9Z)-octadecenoate + ATP + CoA = (9Z)-octadecenoyl-CoA + AMP + diphosphate. It carries out the reaction hexadecanoate + ATP + CoA = hexadecanoyl-CoA + AMP + diphosphate. It catalyses the reaction (9Z)-hexadecenoate + ATP + CoA = (9Z)-hexadecenoyl-CoA + AMP + diphosphate. The catalysed reaction is tetradecanoate + ATP + CoA = tetradecanoyl-CoA + AMP + diphosphate. The enzyme catalyses (9Z)-tetradecenoate + ATP + CoA = (9Z)-tetradecenoyl-CoA + AMP + diphosphate. It carries out the reaction (9Z,12Z)-octadecadienoate + ATP + CoA = (9Z,12Z)-octadecadienoyl-CoA + AMP + diphosphate. It catalyses the reaction dodecanoate + ATP + CoA = dodecanoyl-CoA + AMP + diphosphate. The catalysed reaction is pentadecanoate + ATP + CoA = pentadecanoyl-CoA + AMP + diphosphate. The enzyme catalyses undecanoate + ATP + CoA = undecanoyl-CoA + AMP + diphosphate. It carries out the reaction heptadecanoate + ATP + CoA = heptadecanoyl-CoA + AMP + diphosphate. It catalyses the reaction octadecanoate + ATP + CoA = octadecanoyl-CoA + AMP + diphosphate. In terms of biological role, activates long-chain fatty acids (LCFA) by esterification of the fatty acids into metabolically active CoA-thioesters for subsequent degradation or incorporation into phospholipids. Also facilitates the transport of LCFAs into the cell, either by active transport or by decreasing the intracellular LCFA concentration. It may supplement intracellular myristoyl-CoA pools from exogenous myristate. Preferentially acts on C12:0-C16:0 fatty acids with myristic and pentadecanic acid (C15:0) having the highest activities. Also involved in long-chain base (LCB) uptake of sphingolipids. In contrast ot LCFA uptake, LCB uptake does not require ATP, suggesting that the enzyme is directly involved in active LCB uptake. Involved in the sphingolipid-to-glycerolipid metabolic pathway, converting the sphingolipid metabolite hexadecenoic acid to hexadecenoyl-CoA, which is then further converted to glycerolipids. In Saccharomyces cerevisiae (strain ATCC 204508 / S288c) (Baker's yeast), this protein is Long-chain-fatty-acid--CoA ligase 1 (FAA1).